A 248-amino-acid chain; its full sequence is 3-deoxy-manno-octulosonate cytidylyltransferase (248 aa).

It belongs to the KdsB family.

It localises to the cytoplasm. It carries out the reaction 3-deoxy-alpha-D-manno-oct-2-ulosonate + CTP = CMP-3-deoxy-beta-D-manno-octulosonate + diphosphate. It functions in the pathway nucleotide-sugar biosynthesis; CMP-3-deoxy-D-manno-octulosonate biosynthesis; CMP-3-deoxy-D-manno-octulosonate from 3-deoxy-D-manno-octulosonate and CTP: step 1/1. It participates in bacterial outer membrane biogenesis; lipopolysaccharide biosynthesis. Its function is as follows. Activates KDO (a required 8-carbon sugar) for incorporation into bacterial lipopolysaccharide in Gram-negative bacteria. In Erwinia tasmaniensis (strain DSM 17950 / CFBP 7177 / CIP 109463 / NCPPB 4357 / Et1/99), this protein is 3-deoxy-manno-octulosonate cytidylyltransferase.